The sequence spans 176 residues: Disulfide bond formation protein B (176 aa).

Residues 1–13 (MQFLNTFSKSRIS) are Cytoplasmic-facing. A helical transmembrane segment spans residues 14–30 (WLLLLLCIVFFEGSALF). The Periplasmic segment spans residues 31-48 (FQHGMKLGPCVMCIYERV). The cysteines at positions 40 and 43 are disulfide-linked. Residues 49-64 (AMMGIAFAALLGAIAP) form a helical membrane-spanning segment. Residues 65–71 (QYAIIRW) are Cytoplasmic-facing. A helical transmembrane segment spans residues 72–89 (AGLIAWGYSAVRGLQLSI). Residues 90–144 (EHVGYQFNPSPFATCDLFVQFPNWAPLNKWVPWMFEAYGNCAEVVWTFLGQSMPQ) are Periplasmic-facing. A disulfide bridge connects residues cysteine 104 and cysteine 130. A helical transmembrane segment spans residues 145–163 (WLVIIFAGNLVALALIVIA). The Cytoplasmic segment spans residues 164 to 176 (QFFSKKTNTILDM).

It belongs to the DsbB family.

The protein resides in the cell inner membrane. In terms of biological role, required for disulfide bond formation in some periplasmic proteins. Acts by oxidizing the DsbA protein. The chain is Disulfide bond formation protein B from Photobacterium profundum (strain SS9).